A 380-amino-acid chain; its full sequence is Cytochrome b (380 aa).

Transmembrane regions (helical) follow at residues 34 to 54, 78 to 99, 114 to 134, and 179 to 199; these read FGSL…LLAM, WLIR…YLHI, WNTG…GYVL, and FFAL…IHLT. Heme b-binding residues include H84 and H98. Heme b-binding residues include H183 and H197. Position 202 (H202) interacts with a ubiquinone. 4 helical membrane passes run 227 to 247, 289 to 309, 321 to 341, and 348 to 368; these read LKDI…ALFS, LGGV…PFLH, LSQL…WVGS, and FIII…ILFP.

This sequence belongs to the cytochrome b family. As to quaternary structure, the cytochrome bc1 complex contains 11 subunits: 3 respiratory subunits (MT-CYB, CYC1 and UQCRFS1), 2 core proteins (UQCRC1 and UQCRC2) and 6 low-molecular weight proteins (UQCRH/QCR6, UQCRB/QCR7, UQCRQ/QCR8, UQCR10/QCR9, UQCR11/QCR10 and a cleavage product of UQCRFS1). This cytochrome bc1 complex then forms a dimer. It depends on heme b as a cofactor.

The protein localises to the mitochondrion inner membrane. Component of the ubiquinol-cytochrome c reductase complex (complex III or cytochrome b-c1 complex) that is part of the mitochondrial respiratory chain. The b-c1 complex mediates electron transfer from ubiquinol to cytochrome c. Contributes to the generation of a proton gradient across the mitochondrial membrane that is then used for ATP synthesis. The protein is Cytochrome b (MT-CYB) of Daption capense (Cape petrel).